A 217-amino-acid chain; its full sequence is Transmembrane protein 247 (217 aa).

The span at 1–10 (MATEDREMME) shows a compositional bias: basic and acidic residues. Positions 1–87 (MATEDREMME…GPATTKGQAG (87 aa)) are disordered. The stretch at 109 to 154 (RERDAEMELEKVRMEFELKRLKYLHEENERQRQHEEVMEQLQQQAT) forms a coiled coil. Helical transmembrane passes span 165–185 (LLLP…IHII) and 192–212 (IFFL…LCLI).

It localises to the membrane. The protein is Transmembrane protein 247 of Bos taurus (Bovine).